Consider the following 357-residue polypeptide: Alanine racemase, catabolic (357 aa).

The active-site Proton acceptor; specific for D-alanine is K33. At K33 the chain carries N6-(pyridoxal phosphate)lysine. An N6-carboxylysine modification is found at K122. R129 is a binding site for substrate. Y253 acts as the Proton acceptor; specific for L-alanine in catalysis. Substrate is bound at residue M301.

It belongs to the alanine racemase family. As to quaternary structure, homodimer. The cofactor is pyridoxal 5'-phosphate.

The catalysed reaction is L-alanine = D-alanine. Functionally, isomerizes L-alanine to D-alanine which is then oxidized to pyruvate by DadA. This is Alanine racemase, catabolic from Pseudomonas aeruginosa (strain ATCC 15692 / DSM 22644 / CIP 104116 / JCM 14847 / LMG 12228 / 1C / PRS 101 / PAO1).